A 316-amino-acid chain; its full sequence is Beta-ketoacyl-[acyl-carrier-protein] synthase III 4 (316 aa).

Residues Cys-114 and His-242 contribute to the active site. Positions 243–247 are ACP-binding; that stretch reads QANLR. The active site involves Asn-272.

The protein belongs to the thiolase-like superfamily. FabH family. As to quaternary structure, homodimer.

It localises to the cytoplasm. It carries out the reaction malonyl-[ACP] + acetyl-CoA + H(+) = 3-oxobutanoyl-[ACP] + CO2 + CoA. The protein operates within lipid metabolism; fatty acid biosynthesis. Functionally, catalyzes the condensation reaction of fatty acid synthesis by the addition to an acyl acceptor of two carbons from malonyl-ACP. Catalyzes the first condensation reaction which initiates fatty acid synthesis and may therefore play a role in governing the total rate of fatty acid production. Possesses both acetoacetyl-ACP synthase and acetyl transacylase activities. Its substrate specificity determines the biosynthesis of branched-chain and/or straight-chain of fatty acids. The sequence is that of Beta-ketoacyl-[acyl-carrier-protein] synthase III 4 from Streptomyces coelicolor (strain ATCC BAA-471 / A3(2) / M145).